Here is a 275-residue protein sequence, read N- to C-terminus: Dermonecrotic toxin LruSicTox-alphaIV1 (275 aa).

Residue H5 is part of the active site. Mg(2+) contacts are provided by E25 and D27. H41 acts as the Nucleophile in catalysis. Cystine bridges form between C45-C51 and C47-C192. D85 serves as a coordination point for Mg(2+).

Belongs to the arthropod phospholipase D family. Class II subfamily. Requires Mg(2+) as cofactor. In terms of tissue distribution, expressed by the venom gland.

The protein resides in the secreted. It carries out the reaction an N-(acyl)-sphingosylphosphocholine = an N-(acyl)-sphingosyl-1,3-cyclic phosphate + choline. The enzyme catalyses an N-(acyl)-sphingosylphosphoethanolamine = an N-(acyl)-sphingosyl-1,3-cyclic phosphate + ethanolamine. It catalyses the reaction a 1-acyl-sn-glycero-3-phosphocholine = a 1-acyl-sn-glycero-2,3-cyclic phosphate + choline. The catalysed reaction is a 1-acyl-sn-glycero-3-phosphoethanolamine = a 1-acyl-sn-glycero-2,3-cyclic phosphate + ethanolamine. In terms of biological role, dermonecrotic toxins cleave the phosphodiester linkage between the phosphate and headgroup of certain phospholipids (sphingolipid and lysolipid substrates), forming an alcohol (often choline) and a cyclic phosphate. This toxin acts on sphingomyelin (SM). It may also act on ceramide phosphoethanolamine (CPE), lysophosphatidylcholine (LPC) and lysophosphatidylethanolamine (LPE), but not on lysophosphatidylserine (LPS), and lysophosphatidylglycerol (LPG). It acts by transphosphatidylation, releasing exclusively cyclic phosphate products as second products. Induces dermonecrosis, hemolysis, increased vascular permeability, edema, inflammatory response, and platelet aggregation. This is Dermonecrotic toxin LruSicTox-alphaIV1 from Loxosceles rufescens (Mediterranean recluse spider).